The primary structure comprises 292 residues: NAD kinase (292 aa).

Catalysis depends on aspartate 73, which acts as the Proton acceptor. Residues aspartate 73–glycine 74, asparagine 147–glutamate 148, histidine 158, arginine 175, aspartate 177, threonine 188–serine 193, and glutamine 247 each bind NAD(+).

It belongs to the NAD kinase family. It depends on a divalent metal cation as a cofactor.

It is found in the cytoplasm. The enzyme catalyses NAD(+) + ATP = ADP + NADP(+) + H(+). Functionally, involved in the regulation of the intracellular balance of NAD and NADP, and is a key enzyme in the biosynthesis of NADP. Catalyzes specifically the phosphorylation on 2'-hydroxyl of the adenosine moiety of NAD to yield NADP. The chain is NAD kinase from Klebsiella pneumoniae subsp. pneumoniae (strain ATCC 700721 / MGH 78578).